Here is a 364-residue protein sequence, read N- to C-terminus: Mannose-1-phosphate guanyltransferase (364 aa).

Belongs to the transferase hexapeptide repeat family.

The protein localises to the cytoplasm. It catalyses the reaction alpha-D-mannose 1-phosphate + GTP + H(+) = GDP-alpha-D-mannose + diphosphate. Its pathway is nucleotide-sugar biosynthesis; GDP-alpha-D-mannose biosynthesis; GDP-alpha-D-mannose from alpha-D-mannose 1-phosphate (GTP route): step 1/1. Functionally, involved in cell wall synthesis where it is required for glycosylation. Involved in cell cycle progression through cell-size checkpoint. This chain is Mannose-1-phosphate guanyltransferase (MPG1), found in Gibberella zeae (strain ATCC MYA-4620 / CBS 123657 / FGSC 9075 / NRRL 31084 / PH-1) (Wheat head blight fungus).